The primary structure comprises 361 residues: Plasmid recombination enzyme (361 aa).

The DNA site is built by tyrosine 44 and tyrosine 114. Positions 331-361 are disordered; the sequence is RAGLKEPSKKAPESSQELDRHKSDELGGPHL.

The protein belongs to the plasmid mobilization pre family.

The interaction of the RSA site and the pre protein may not only serve a function in plasmid maintenance, but also contribute to the distribution of small antibiotic resistance plasmids among Gram-positive bacteria. The polypeptide is Plasmid recombination enzyme (preA) (Lactiplantibacillus plantarum (Lactobacillus plantarum)).